Here is a 389-residue protein sequence, read N- to C-terminus: Phospho-N-acetylmuramoyl-pentapeptide-transferase (389 aa).

The next 10 helical transmembrane spans lie at 25–45 (RAVM…PWVI), 73–93 (TMGG…WGDL), 97–117 (FIWI…VDDY), 135–155 (FWQS…VSEA), 190–210 (ISYP…IVGA), 222–242 (GLVI…AYVM), 258–278 (GAGE…AFLW), 286–306 (VFMG…VAVI), 311–331 (IVLF…MLQV), and 366–386 (QVVV…LSTL).

It belongs to the glycosyltransferase 4 family. MraY subfamily. It depends on Mg(2+) as a cofactor.

Its subcellular location is the cell inner membrane. The catalysed reaction is UDP-N-acetyl-alpha-D-muramoyl-L-alanyl-gamma-D-glutamyl-meso-2,6-diaminopimeloyl-D-alanyl-D-alanine + di-trans,octa-cis-undecaprenyl phosphate = di-trans,octa-cis-undecaprenyl diphospho-N-acetyl-alpha-D-muramoyl-L-alanyl-D-glutamyl-meso-2,6-diaminopimeloyl-D-alanyl-D-alanine + UMP. It functions in the pathway cell wall biogenesis; peptidoglycan biosynthesis. In terms of biological role, catalyzes the initial step of the lipid cycle reactions in the biosynthesis of the cell wall peptidoglycan: transfers peptidoglycan precursor phospho-MurNAc-pentapeptide from UDP-MurNAc-pentapeptide onto the lipid carrier undecaprenyl phosphate, yielding undecaprenyl-pyrophosphoryl-MurNAc-pentapeptide, known as lipid I. The polypeptide is Phospho-N-acetylmuramoyl-pentapeptide-transferase (Burkholderia pseudomallei (strain 1106a)).